The chain runs to 243 residues: 1-(5-phosphoribosyl)-5-[(5-phosphoribosylamino)methylideneamino] imidazole-4-carboxamide isomerase (243 aa).

Aspartate 8 (proton acceptor) is an active-site residue. Catalysis depends on aspartate 128, which acts as the Proton donor.

Belongs to the HisA/HisF family.

Its subcellular location is the cytoplasm. It carries out the reaction 1-(5-phospho-beta-D-ribosyl)-5-[(5-phospho-beta-D-ribosylamino)methylideneamino]imidazole-4-carboxamide = 5-[(5-phospho-1-deoxy-D-ribulos-1-ylimino)methylamino]-1-(5-phospho-beta-D-ribosyl)imidazole-4-carboxamide. It functions in the pathway amino-acid biosynthesis; L-histidine biosynthesis; L-histidine from 5-phospho-alpha-D-ribose 1-diphosphate: step 4/9. In Opitutus terrae (strain DSM 11246 / JCM 15787 / PB90-1), this protein is 1-(5-phosphoribosyl)-5-[(5-phosphoribosylamino)methylideneamino] imidazole-4-carboxamide isomerase.